Here is a 123-residue protein sequence, read N- to C-terminus: Protein HesB, vegetative (123 aa).

Belongs to the HesB/IscA family.

Functionally, may be required for efficient nitrogen fixation. In Trichormus variabilis (strain ATCC 29413 / PCC 7937) (Anabaena variabilis), this protein is Protein HesB, vegetative (hesB2).